A 129-amino-acid chain; its full sequence is uncharacterized protein (129 aa).

A helical transmembrane segment spans residues 5–25; it reads IIGLTLAFFVLFLTAVAILFT.

It localises to the membrane. This is an uncharacterized protein from Mycoplasma pneumoniae (strain ATCC 29342 / M129 / Subtype 1) (Mycoplasmoides pneumoniae).